Reading from the N-terminus, the 342-residue chain is Nuclear hormone receptor family member nhr-150 (342 aa).

Residues Met1 to Ser71 constitute a DNA-binding region (nuclear receptor). An NR C4-type zinc finger spans residues Cys2–Cys22. The NR C4-type; degenerate zinc finger occupies Cys39–Cys54. The 248-residue stretch at Ser94–Lys341 folds into the NR LBD domain.

This sequence belongs to the nuclear hormone receptor family.

It localises to the nucleus. Orphan nuclear receptor. The sequence is that of Nuclear hormone receptor family member nhr-150 (nhr-150) from Caenorhabditis elegans.